The primary structure comprises 510 residues: Ribonuclease Y (510 aa).

A helical transmembrane segment spans residues 2–22 (IYIIFSSIFAGFILGFLVRVF). The region spanning 198 to 258 (TVASVELPND…IRKELAKRTL (61 aa)) is the KH domain. One can recognise an HD domain in the interval 324 to 419 (VLSHSKETAI…VQIADAISAS (96 aa)).

This sequence belongs to the RNase Y family.

It localises to the cell membrane. Functionally, endoribonuclease that initiates mRNA decay. The chain is Ribonuclease Y from Borrelia garinii subsp. bavariensis (strain ATCC BAA-2496 / DSM 23469 / PBi) (Borreliella bavariensis).